Here is a 354-residue protein sequence, read N- to C-terminus: MTDIDYKLEAVPATRIAADDIDKTFRSSTIDLISGALGGKVLGFSDEWFAEAANLLTPTAPIRQPGKMVYTGAWYDGWETRRHNPAEFDWVVIRLGVASGTVEGVEIDTAFFNGNHAPAISVEGCFSQNDDEVLSWKGERGGWETILGVQECGPSQRFGWKLENPTKKQYTHVRLNMYPDGGIARFRLFGHAVPVFPDNTDAIFDLAAAQNGGVAISCSDQHFGTKDNLILPGRGKDMGDGWETARSRTKGHVDWTIIRLGAPGYIQNFMVDTAHFRGNYPQQVKLQAIEWKSEGEPGADSEGWTEVVEPIKCGPDQEHPVESLVKDKPFTHVKLIIVPDGGVKRLRVFAKRAV.

This sequence belongs to the allantoicase family.

The catalysed reaction is allantoate + H2O = (S)-ureidoglycolate + urea. The protein operates within nitrogen metabolism; (S)-allantoin degradation; (S)-ureidoglycolate from allantoate (aminidohydrolase route): step 1/1. Functionally, utilization of purines as secondary nitrogen sources, when primary sources are limiting. The sequence is that of Allantoicase (alc-1) from Neurospora crassa (strain ATCC 24698 / 74-OR23-1A / CBS 708.71 / DSM 1257 / FGSC 987).